A 192-amino-acid polypeptide reads, in one-letter code: Thiamine transporter ThiT (192 aa).

The next 6 membrane-spanning stretches (helical) occupy residues 10-30, 31-51, 57-77, 81-101, 123-143, and 164-184; these read LIEIAIMTAAAVILDIVSGMF, LSMPQGGSVSIMMIPIFLISF, AGLTTGLLTGLVQIAIGNLFA, VQLLLDYIVAFAAIGISGCFA, AVFIGSLLRYAAHVISGAVFF, and YMVPSFIICAIVLCLLFMTAP.

Belongs to the vitamin uptake transporter (VUT/ECF) (TC 2.A.88) family. Thiamine transporter subfamily. In terms of assembly, forms a stable energy-coupling factor (ECF) transporter complex composed of a membrane-embedded substrate-binding protein (S component), two ATP-binding proteins (A components) and a transmembrane protein (T component).

Its subcellular location is the cell membrane. In terms of biological role, probably a thiamine-binding protein that interacts with the energy-coupling factor (ECF) ABC-transporter complex. Unlike classic ABC transporters this ECF transporter provides the energy necessary to transport a number of different substrates. The substrates themselves are bound by transmembrane, not extracytoplasmic soluble proteins. This is Thiamine transporter ThiT (thiT) from Bacillus subtilis (strain 168).